A 267-amino-acid chain; its full sequence is Interleukin-1 beta (267 aa).

Positions 1–114 (MAIVPEPAKE…ETCNDDFVCD (114 aa)) are excised as a propeptide.

The protein belongs to the IL-1 family. As to quaternary structure, (Microbial infection) Interacts with African swine fever virus (ASFV) protein L83L. In terms of assembly, monomer. In its precursor form, weakly interacts with full-length MEFV; the mature cytokine does not interact at all. Interacts with integrins ITGAV:ITGBV and ITGA5:ITGB1; integrin-binding is required for IL1B signaling. Interacts with cargo receptor TMED10; the interaction is direct and is required for the secretion of IL1B mature form. Interacts with HSP90AB1; the interaction facilitates cargo translocation into the ERGIC. Interacts with HSP90B1; the interaction facilitates cargo translocation into the ERGIC.

It localises to the cytoplasm. Its subcellular location is the cytosol. The protein localises to the secreted. The protein resides in the lysosome. It is found in the extracellular exosome. Its function is as follows. Potent pro-inflammatory cytokine. Initially discovered as the major endogenous pyrogen, induces prostaglandin synthesis, neutrophil influx and activation, T-cell activation and cytokine production, B-cell activation and antibody production, and fibroblast proliferation and collagen production. Promotes Th17 differentiation of T-cells. Synergizes with IL12/interleukin-12 to induce IFNG synthesis from T-helper 1 (Th1) cells. Plays a role in angiogenesis by inducing VEGF production synergistically with TNF and IL6. Involved in transduction of inflammation downstream of pyroptosis: its mature form is specifically released in the extracellular milieu by passing through the gasdermin-D (GSDMD) pore. This chain is Interleukin-1 beta (IL1B), found in Sus scrofa (Pig).